The primary structure comprises 346 residues: Histone PARylation factor 1 (346 aa).

Position 1 is an N-acetylmethionine (M1). The disordered stretch occupies residues 1–23 (MVGGGGKRRPGGEGPQCEKTTDV). Residue K19 is modified to N6-acetyllysine. ADP-ribosylserine is present on S97. N6-acetyllysine is present on residues K186 and K233. D235 is modified (polyADP-ribosyl aspartic acid). ADP-ribosyltyrosine is present on Y238. A PolyADP-ribosyl glutamic acid modification is found at E240. The tract at residues 242–346 (PETDADLKRI…SQENIDQLAA (105 aa)) is interaction with PARP1. The active-site Proton donor is the E284.

Belongs to the HPF1 family. As to quaternary structure, interacts with PARP1 (via the PARP catalytic domain). Interacts with PARP2 (via the PARP catalytic domain). Interacts with core nucleosomes in a PARP1- and PARP2-dependent manner.

The protein localises to the chromosome. It localises to the nucleus. Its function is as follows. Cofactor for serine ADP-ribosylation that confers serine specificity on PARP1 and PARP2 and plays a key role in DNA damage response. Initiates the repair of double-strand DNA breaks: recruited to DNA damage sites by PARP1 and PARP2 and switches the amino acid specificity of PARP1 and PARP2 from aspartate or glutamate to serine residues, licensing serine ADP-ribosylation of target proteins. Serine ADP-ribosylation of target proteins, such as histones, promotes decompaction of chromatin and the recruitment of repair factors leading to the reparation of DNA strand breaks. Serine ADP-ribosylation of proteins constitutes the primary form of ADP-ribosylation of proteins in response to DNA damage. HPF1 acts by completing the active site of PARP1 and PARP2: forms a composite active site composed of residues from HPF1 and PARP1 or PARP2. While HPF1 promotes the initiation of serine ADP-ribosylation, it restricts the polymerase activity of PARP1 and PARP2 in order to limit the length of poly-ADP-ribose chains. HPF1 also promotes tyrosine ADP-ribosylation, probably by conferring tyrosine specificity on PARP1. The polypeptide is Histone PARylation factor 1 (Homo sapiens (Human)).